The sequence spans 260 residues: Cytochrome c oxidase subunit 3 (260 aa).

Residues methionine 1–proline 15 are Mitochondrial matrix-facing. Residues tryptophan 16–tryptophan 34 traverse the membrane as a helical segment. Topologically, residues phenylalanine 35–threonine 40 are mitochondrial intermembrane. A helical transmembrane segment spans residues alanine 41 to threonine 66. Residues phenylalanine 67–threonine 72 are Mitochondrial matrix-facing. Residues proline 73–serine 105 form a helical membrane-spanning segment. The Mitochondrial intermembrane portion of the chain corresponds to leucine 106 to glutamate 128. A helical membrane pass occupies residues valine 129–methionine 152. Topologically, residues glutamate 153–aspartate 155 are mitochondrial matrix. The helical transmembrane segment at arginine 156–glutamate 183 threads the bilayer. The Mitochondrial intermembrane portion of the chain corresponds to alanine 184–aspartate 190. A helical membrane pass occupies residues glycine 191–leucine 223. At lysine 224–histidine 232 the chain is on the mitochondrial matrix side. A helical transmembrane segment spans residues phenylalanine 233–isoleucine 256. Residues tyrosine 257–glycine 260 are Mitochondrial intermembrane-facing.

The protein belongs to the cytochrome c oxidase subunit 3 family. In terms of assembly, component of the cytochrome c oxidase (complex IV, CIV), a multisubunit enzyme composed of 14 subunits. The complex is composed of a catalytic core of 3 subunits MT-CO1, MT-CO2 and MT-CO3, encoded in the mitochondrial DNA, and 11 supernumerary subunits COX4I, COX5A, COX5B, COX6A, COX6B, COX6C, COX7A, COX7B, COX7C, COX8 and NDUFA4, which are encoded in the nuclear genome. The complex exists as a monomer or a dimer and forms supercomplexes (SCs) in the inner mitochondrial membrane with NADH-ubiquinone oxidoreductase (complex I, CI) and ubiquinol-cytochrome c oxidoreductase (cytochrome b-c1 complex, complex III, CIII), resulting in different assemblies (supercomplex SCI(1)III(2)IV(1) and megacomplex MCI(2)III(2)IV(2)).

It is found in the mitochondrion inner membrane. The catalysed reaction is 4 Fe(II)-[cytochrome c] + O2 + 8 H(+)(in) = 4 Fe(III)-[cytochrome c] + 2 H2O + 4 H(+)(out). Its function is as follows. Component of the cytochrome c oxidase, the last enzyme in the mitochondrial electron transport chain which drives oxidative phosphorylation. The respiratory chain contains 3 multisubunit complexes succinate dehydrogenase (complex II, CII), ubiquinol-cytochrome c oxidoreductase (cytochrome b-c1 complex, complex III, CIII) and cytochrome c oxidase (complex IV, CIV), that cooperate to transfer electrons derived from NADH and succinate to molecular oxygen, creating an electrochemical gradient over the inner membrane that drives transmembrane transport and the ATP synthase. Cytochrome c oxidase is the component of the respiratory chain that catalyzes the reduction of oxygen to water. Electrons originating from reduced cytochrome c in the intermembrane space (IMS) are transferred via the dinuclear copper A center (CU(A)) of subunit 2 and heme A of subunit 1 to the active site in subunit 1, a binuclear center (BNC) formed by heme A3 and copper B (CU(B)). The BNC reduces molecular oxygen to 2 water molecules using 4 electrons from cytochrome c in the IMS and 4 protons from the mitochondrial matrix. This is Cytochrome c oxidase subunit 3 (MT-CO3) from Bos mutus grunniens (Wild yak).